The primary structure comprises 102 residues: ATP-dependent Clp protease adapter protein ClpS (102 aa).

It belongs to the ClpS family. In terms of assembly, binds to the N-terminal domain of the chaperone ClpA.

Its function is as follows. Involved in the modulation of the specificity of the ClpAP-mediated ATP-dependent protein degradation. The chain is ATP-dependent Clp protease adapter protein ClpS from Shewanella pealeana (strain ATCC 700345 / ANG-SQ1).